The sequence spans 339 residues: Silicatein (339 aa).

A signal peptide spans 1 to 18 (MAIVYGAILFQIILIACA). A propeptide spanning residues 19 to 122 (EFPPEWHAWK…REYQAPATVS (104 aa)) is cleaved from the precursor. L123 carries the post-translational modification N,N-dimethylleucine; alternate. N-methylleucine; alternate is present on L123. S188 carries the phosphoserine modification. Y219 is modified (phosphotyrosine). Residues H286 and N306 contribute to the active site. A Phosphoserine modification is found at S335.

Belongs to the peptidase C1 family. Homodimer. Homodimerization occurs as a result of non-covalent interactions and not through disulfide linkages between the two monomers.

Polymerizes silica around the axial filament during spicule formation. The sequence is that of Silicatein from Petrosia ficiformis (Common Mediterranean sponge).